The chain runs to 299 residues: Kynurenine formamidase-like hydrolase fscH (299 aa).

The HGGXW motif lies at 48 to 52; sequence HGGAW. The tract at residues 90–110 is disordered; that stretch reads SPRTPSQPVPSGGHVGGEQQA. Catalysis depends on Ser142, which acts as the Nucleophile.

It belongs to the kynurenine formamidase family.

It functions in the pathway secondary metabolite biosynthesis. Its function is as follows. Kynurenine formamidase-like hydrolase; part of the fragmented gene cluster that mediates the biosynthesis of fusarochromene, a tryptophan-derived metabolite closely related to a group of mycotoxins including fusarochromanone. Within the pathway, fscH converts the product of fscD into 4-hydroxykyrunenine. The first step of the pathway is the epimerization of L-tryptophan to D-tryptophan in the presence of the NRPS-like tryptophan epimerase fscC. D-tryptophan is subsequently hydroxylated by the tryptophan 6-hydroxylase fscE to yield 6-hydroxytryptophan. The pyrrole ring undergoes cleavaged by the tryptophan 2,3-dioxygenase fscD and is finally converted to 4-hydroxykyrunenine by the hydrolase fscH. The NRPS-like oxidoreductase fscA reduces the carboxyl group to primary alcohol and the DMATS-type prenyltransferase fscG performs prenylation, followed by the formation of a chromene ring catalyzed by the oxidoreductase fscI, which leads to desacetylfusarochromene. Epoxidation by fscF and rearrangement reactions of chromene double bonds convert compound desacetylfusarochromene to fusarochromanones. Although specific acetyltransferases were not found near the fsc gene cluster, several predicted enzymes containing the N-acetyltransferase superfamily domain are present in the genome of F.equiseti. These predicted enzymes may have the potential to convert desacetylfusarochromene to fusarochromene. The polypeptide is Kynurenine formamidase-like hydrolase fscH (Fusarium equiseti (Fusarium scirpi)).